The following is a 240-amino-acid chain: UDP-2,3-diacylglucosamine hydrolase (240 aa).

Mn(2+) contacts are provided by Asp-7, His-9, Asp-40, Asn-78, and His-113. Asn-78–Arg-79 serves as a coordination point for substrate. 4 residues coordinate substrate: Asp-121, Ser-159, Lys-166, and His-194. The Mn(2+) site is built by His-194 and His-196.

It belongs to the LpxH family. The cofactor is Mn(2+).

It localises to the cell inner membrane. It carries out the reaction UDP-2-N,3-O-bis[(3R)-3-hydroxytetradecanoyl]-alpha-D-glucosamine + H2O = 2-N,3-O-bis[(3R)-3-hydroxytetradecanoyl]-alpha-D-glucosaminyl 1-phosphate + UMP + 2 H(+). The protein operates within glycolipid biosynthesis; lipid IV(A) biosynthesis; lipid IV(A) from (3R)-3-hydroxytetradecanoyl-[acyl-carrier-protein] and UDP-N-acetyl-alpha-D-glucosamine: step 4/6. Functionally, hydrolyzes the pyrophosphate bond of UDP-2,3-diacylglucosamine to yield 2,3-diacylglucosamine 1-phosphate (lipid X) and UMP by catalyzing the attack of water at the alpha-P atom. Involved in the biosynthesis of lipid A, a phosphorylated glycolipid that anchors the lipopolysaccharide to the outer membrane of the cell. The polypeptide is UDP-2,3-diacylglucosamine hydrolase (Pseudomonas putida (strain ATCC 700007 / DSM 6899 / JCM 31910 / BCRC 17059 / LMG 24140 / F1)).